A 109-amino-acid polypeptide reads, in one-letter code: Flagellar hook-basal body complex protein FliE (109 aa).

Belongs to the FliE family.

It is found in the bacterial flagellum basal body. This chain is Flagellar hook-basal body complex protein FliE, found in Pseudomonas paraeruginosa (strain DSM 24068 / PA7) (Pseudomonas aeruginosa (strain PA7)).